An 864-amino-acid chain; its full sequence is Dynamin-1 (864 aa).

Positions D28–P294 constitute a Dynamin-type G domain. The tract at residues G38–S45 is G1 motif. S41, G43, K44, S45, S46, R59, and G60 together coordinate GDP. A G2 motif region spans residues V64 to R66. A Phosphotyrosine modification is found at Y80. Y125 is subject to 3'-nitrotyrosine; alternate. Phosphotyrosine; alternate is present on Y125. The segment at D136–G139 is G3 motif. The interval T205–D208 is G4 motif. Residues K206, D208, D211, N236, R237, and Q239 each contribute to the GDP site. Residues V235 to S238 form a G5 motif region. S306 and S347 each carry phosphoserine. Phosphotyrosine is present on Y354. Residue S512 is modified to Phosphoserine. One can recognise a PH domain in the interval L519 to V625. Residues V659–V750 form the GED domain. Residues S767–L864 form a disordered region. S774 is modified (phosphoserine; by CDK5). The residue at position 778 (S778) is a Phosphoserine. R796 carries the omega-N-methylarginine modification. A Phosphoserine modification is found at S822. Over residues P825–V843 the composition is skewed to pro residues. Phosphoserine is present on residues S851 and S857.

This sequence belongs to the TRAFAC class dynamin-like GTPase superfamily. Dynamin/Fzo/YdjA family. As to quaternary structure, homodimer; homodimerization is mediated by the dynamin-type G domain which promotes assembly-stimulated GTPase activity. Homo-tetramer formed from two dimers in the absence of lipid. Oligomerizes into a helical polymer that self-assembles around the vesicle membrane, when associated to the menbrane through lipid binding. Interacts (via C-terminal proline-rich domain (PRD)) with SNX9 (via SH3 domain); this interaction allows regulation of DNM1 self-assembly during late stages of endocytic vesicle formation and supports DNM1's early functions in accelerating clathrin-coated pits (CCPs) maturation in non neuronals cell. Interacts (via C-terminal proline-rich domain (PRD)) with MYO1E (via SH3 domain); this interaction regulates receptor-mediated endocytosis. Interacts with SNX33 (via SH3 domain); this interaction decreases DNM1-dependent endocytosis. Interacts with DIAPH1. Interacts with GRB2 (via SH3 domain); this interaction mediates disassembly of DNM1 polymers, therefore modulates self-assembly. Forms a complex with BIN1 (via SH3 domain) and SH3GL2 (via SH3 domain). Forms a complex with SH3GL2 (via SH3 domain) and AMPH (via SH3 domain). Forms a complex with SH3GL2 (via SH3 domain) and SYNJ1. Interacts with AMPH. Interacts (via C-terminal proline-rich domain (PRD)) with SYT1; this interaction facilitates vesicle fission during clathrin-mediated endocytosis (CME). Interacts (via C-terminal proline-rich domain (PRD)) with PLCG1 (via SH3 domain); this interaction stimulates the release of GDP from DNM1 and enhances DNM1-dependent endocytosis. Interacts with SNPH; this interaction inhibits the binding of DNM1 to AMPH and DNM1-receptor-mediated endocytosis. Interacts with CAV1. Interacts with SH3GLB1 (via SH3 domain). Interacts with PACSIN1 (via SH3 domain), PACSIN2 (via SH3 domain) and PACSIN3 (via SH3 domain). Interacts with UNC119; this interaction decreases DNM1's GTPase activity and affects DNM1's interaction with AMPH. Interacts (GTP-bound form) with DNAJC6; this interaction allows clathrin-coated vesicle (CCV) formation at the plasma membrane. In terms of processing, phosphorylation at Ser-774 by GSK3B/GSK3-beta leads to inactivation of receptor-mediated endocytosis in non-neuronal cells. Dephosphorylation at Ser-774, through the EGFR downstream signaling, leads to activation and regulates early stages of clathrin-mediated endocytosis (CME). Phosphorylated by CDK5 leading to synaptic vesicle endocytosis (SVE) activation. In terms of tissue distribution, brain-specific (peripheral sensory neurons).

It is found in the cytoplasmic vesicle. It localises to the clathrin-coated vesicle. Its subcellular location is the golgi apparatus. The protein localises to the cell membrane. The protein resides in the membrane. It is found in the clathrin-coated pit. It localises to the presynapse. Its subcellular location is the secretory vesicle. The protein localises to the chromaffin granule. It carries out the reaction GTP + H2O = GDP + phosphate + H(+). Its function is as follows. Catalyzes the hydrolysis of GTP and utilizes this energy to mediate vesicle scission and participates in many forms of endocytosis, such as clathrin-mediated endocytosis or synaptic vesicle endocytosis as well as rapid endocytosis (RE). Associates to the membrane, through lipid binding, and self-assembles into rings and stacks of interconnected rings through oligomerization to form a helical polymer around the vesicle membrane leading to constriction of invaginated coated pits around their necks. Self-assembly of the helical polymer induces membrane tubules narrowing until the polymer reaches a length sufficient to trigger GTP hydrolysis. Depending on the curvature imposed on the tubules, membrane detachment from the helical polymer upon GTP hydrolysis can cause spontaneous hemifission followed by complete fission. May play a role in regulating early stages of clathrin-mediated endocytosis in non-neuronal cells through its activation by dephosphorylation via the signaling downstream of EGFR. Controls vesicle size at a step before fission, during formation of membrane pits, at hippocampal synapses. Controls plastic adaptation of the synaptic vesicle recycling machinery to high levels of activity. Mediates rapid endocytosis (RE), a Ca(2+)-dependent and clathrin- and K(+)-independent process in chromaffin cells. Microtubule-associated force-producing protein involved in producing microtubule bundles and able to bind and hydrolyze GTP. Through its interaction with DNAJC6, acts during the early steps of clathrin-coated vesicle (CCV) formation. In Rattus norvegicus (Rat), this protein is Dynamin-1 (Dnm1).